Here is a 379-residue protein sequence, read N- to C-terminus: Probable protein phosphatase 2C 46 (379 aa).

The signal sequence occupies residues 1–20; the sequence is MLSTLMKLLSACLWPSSSSG. A PPM-type phosphatase domain is found at 42-353; that stretch reads LVGEFSMAVV…DDITVVIIFL (312 aa). Ser-73 is modified (phosphoserine). Positions 84, 85, 285, and 344 each coordinate Mn(2+).

It belongs to the PP2C family. As to quaternary structure, interacts with SAUR19. Mg(2+) serves as cofactor. Requires Mn(2+) as cofactor.

It catalyses the reaction O-phospho-L-seryl-[protein] + H2O = L-seryl-[protein] + phosphate. It carries out the reaction O-phospho-L-threonyl-[protein] + H2O = L-threonyl-[protein] + phosphate. Functionally, may dephosphorylate and repress plasma membrane H(+)-ATPases (PM H(+)-ATPases, e.g. AHA1 and AHA2), thus influencing negatively plant growth and fitness. In Arabidopsis thaliana (Mouse-ear cress), this protein is Probable protein phosphatase 2C 46.